The primary structure comprises 267 residues: GTP cyclohydrolase MptA (267 aa).

Belongs to the GTP cyclohydrolase IV family. In terms of assembly, homodimer. It depends on Fe(2+) as a cofactor.

The enzyme catalyses GTP + H2O = 7,8-dihydroneopterin 2',3'-cyclic phosphate + formate + diphosphate + H(+). It participates in cofactor biosynthesis; 5,6,7,8-tetrahydromethanopterin biosynthesis. In terms of biological role, converts GTP to 7,8-dihydro-D-neopterin 2',3'-cyclic phosphate, the first intermediate in the biosynthesis of coenzyme methanopterin. The sequence is that of GTP cyclohydrolase MptA from Thermococcus kodakarensis (strain ATCC BAA-918 / JCM 12380 / KOD1) (Pyrococcus kodakaraensis (strain KOD1)).